The sequence spans 327 residues: GMP reductase (327 aa).

Cys-176 functions as the Thioimidate intermediate in the catalytic mechanism. Residue 205 to 228 (IIADGGIRTHGDIAKSIRFGASMV) participates in NADP(+) binding.

It belongs to the IMPDH/GMPR family. GuaC type 2 subfamily.

The enzyme catalyses IMP + NH4(+) + NADP(+) = GMP + NADPH + 2 H(+). Its function is as follows. Catalyzes the irreversible NADPH-dependent deamination of GMP to IMP. It functions in the conversion of nucleobase, nucleoside and nucleotide derivatives of G to A nucleotides, and in maintaining the intracellular balance of A and G nucleotides. The protein is GMP reductase of Streptococcus agalactiae serotype V (strain ATCC BAA-611 / 2603 V/R).